Here is a 63-residue protein sequence, read N- to C-terminus: Conotoxin Cal6.28 (63 aa).

Positions 1 to 22 (MKLTCVLIVAVLILTACQVIAA) are cleaved as a signal peptide. Cystine bridges form between Cys34–Cys45, Cys37–Cys51, and Cys44–Cys58.

It belongs to the conotoxin O1 superfamily. As to expression, expressed by the venom duct.

It localises to the secreted. Its function is as follows. Probable neurotoxin. The chain is Conotoxin Cal6.28 from Californiconus californicus (California cone).